Here is a 490-residue protein sequence, read N- to C-terminus: Protein nucleotidyltransferase YdiU (490 aa).

ATP contacts are provided by glycine 89, glycine 91, arginine 92, lysine 112, aspartate 124, glycine 125, arginine 175, and arginine 182. Aspartate 251 serves as the catalytic Proton acceptor. Residues asparagine 252 and aspartate 261 each contribute to the Mg(2+) site. Aspartate 261 contacts ATP.

Belongs to the SELO family. It depends on Mg(2+) as a cofactor. Requires Mn(2+) as cofactor.

The catalysed reaction is L-seryl-[protein] + ATP = 3-O-(5'-adenylyl)-L-seryl-[protein] + diphosphate. It carries out the reaction L-threonyl-[protein] + ATP = 3-O-(5'-adenylyl)-L-threonyl-[protein] + diphosphate. It catalyses the reaction L-tyrosyl-[protein] + ATP = O-(5'-adenylyl)-L-tyrosyl-[protein] + diphosphate. The enzyme catalyses L-histidyl-[protein] + UTP = N(tele)-(5'-uridylyl)-L-histidyl-[protein] + diphosphate. The catalysed reaction is L-seryl-[protein] + UTP = O-(5'-uridylyl)-L-seryl-[protein] + diphosphate. It carries out the reaction L-tyrosyl-[protein] + UTP = O-(5'-uridylyl)-L-tyrosyl-[protein] + diphosphate. Nucleotidyltransferase involved in the post-translational modification of proteins. It can catalyze the addition of adenosine monophosphate (AMP) or uridine monophosphate (UMP) to a protein, resulting in modifications known as AMPylation and UMPylation. In Vibrio vulnificus (strain CMCP6), this protein is Protein nucleotidyltransferase YdiU.